A 436-amino-acid polypeptide reads, in one-letter code: MNYTTQMDAAKKGIITKEMQVVSEKEGINIETLMNLMAEGKIVIPANKNHKSISAEGVGQGLRTKINVNLGISKDCANIELELEKVKKAIDMNAESIMDLSNYGKTYDFRKRLVEVSTAMIGTVPMYDVVGFYDKELKDITVDEFFEVVEKHAKDGVDFVTIHAGLNRETIETFRRNKRLTNIVSRGGSLLFAWMELNNRENPFYEYFDRLLDICEKYDLTLSLGDACRPGSIADATDAVQIKELITLGELTKRAWERNVQVIIEGPGHMAMNEIEANVLLEKKLCHGAPFYVLGPIVTDIAPGYDHITSAIGGAMAASYGADFLCYVTPAEHLRLPNLEDVREGIVATKIAAHAADIAKGISGARDIDNKMSDARKRLDWDEMFSLAIDSEKAIRYRKESTPEHKDSCTMCGKMCSIRNMNKILEGKDINLLRED.

Substrate is bound by residues asparagine 69, methionine 98, tyrosine 127, histidine 163, 185–187 (SRG), 226–229 (DACR), and glutamate 265. Zn(2+) is bound at residue histidine 269. Position 292 (tyrosine 292) interacts with substrate. Histidine 333 serves as a coordination point for Zn(2+). Positions 409, 412, and 416 each coordinate [4Fe-4S] cluster.

This sequence belongs to the ThiC family. [4Fe-4S] cluster is required as a cofactor.

The enzyme catalyses 5-amino-1-(5-phospho-beta-D-ribosyl)imidazole + S-adenosyl-L-methionine = 4-amino-2-methyl-5-(phosphooxymethyl)pyrimidine + CO + 5'-deoxyadenosine + formate + L-methionine + 3 H(+). It functions in the pathway cofactor biosynthesis; thiamine diphosphate biosynthesis. Its function is as follows. Catalyzes the synthesis of the hydroxymethylpyrimidine phosphate (HMP-P) moiety of thiamine from aminoimidazole ribotide (AIR) in a radical S-adenosyl-L-methionine (SAM)-dependent reaction. The chain is Phosphomethylpyrimidine synthase from Clostridium perfringens (strain ATCC 13124 / DSM 756 / JCM 1290 / NCIMB 6125 / NCTC 8237 / Type A).